The following is a 752-amino-acid chain: Peptidyl-prolyl cis-trans isomerase G (752 aa).

A PPIase cyclophilin-type domain is found at 11 to 176 (FFDIAINNQP…AEVRILSCGE (166 aa)). Over residues 182–193 (KVKKEEKKRHKS) the composition is skewed to basic residues. The interval 182 to 752 (KVKKEEKKRH…SPGTDEDKSG (571 aa)) is disordered. Over residues 194-214 (SSSSSSSDSDSSSDSQSSSES) the composition is skewed to low complexity. Positions 226 to 251 (RKRKKKHRKNSRKHKKEKKKRKKSKK) are enriched in basic residues. Phosphoserine is present on residues S252, S254, S255, S257, and S288. Basic and acidic residues predominate over residues 290–308 (PKADDKERKNREREREREC). S313 is subject to Phosphoserine. Over residues 327-345 (SGRKIKGRGPRRYRTPSRS) the composition is skewed to basic residues. Composition is skewed to basic and acidic residues over residues 346–366 (RSRDRFRRSETPPHWRQEMQR) and 377–447 (RWIK…DKYN). Residue S354 is modified to Phosphoserine. A Phosphothreonine modification is found at T356. The residue at position 384 (S384) is a Phosphoserine. A Glycyl lysine isopeptide (Lys-Gly) (interchain with G-Cter in SUMO2) cross-link involves residue K390. A phosphoserine mark is found at S395, S411, and S413. The segment covering 448–461 (KNKVKKRGKSKSRS) has biased composition (basic residues). Basic and acidic residues-rich tracts occupy residues 462–552 (KSKE…DLTK) and 577–598 (RSHDRDRSRSKEYHRYREQEYR). The segment covering 599–625 (RRGRSRSRDRRTPGRSRSKDRRRRRRD) has biased composition (basic residues). A compositionally biased stretch (basic and acidic residues) spans 626-684 (SRSSEREESQSRNKDKYRSQESKSSHRKENSEGEKRTYSKSRDHNSSSNNREKKADREQ). Phosphoserine is present on residues S685 and S688. The segment covering 685–705 (SPVSKTKQSSQDNEVKSSTLK) has biased composition (polar residues). K691 is covalently cross-linked (Glycyl lysine isopeptide (Lys-Gly) (interchain with G-Cter in SUMO2)). A phosphoserine mark is found at S694, S742, and S743. Residues 706-752 (NQEDEKTRSPVEKENQKSKGQENDHVHDKNKKCDHESSPGTDEDKSG) show a composition bias toward basic and acidic residues. T746 is subject to Phosphothreonine. A Phosphoserine modification is found at S751.

As to quaternary structure, interacts with CLK1, PNN and with the phosphorylated C-terminal domain of RNA polymerase II.

Its subcellular location is the nucleus matrix. It is found in the nucleus speckle. The enzyme catalyses [protein]-peptidylproline (omega=180) = [protein]-peptidylproline (omega=0). With respect to regulation, inhibited by cyclosporin A (CsA). Its function is as follows. PPIase that catalyzes the cis-trans isomerization of proline imidic peptide bonds in oligopeptides and may therefore assist protein folding. May be implicated in the folding, transport, and assembly of proteins. May play an important role in the regulation of pre-mRNA splicing. The polypeptide is Peptidyl-prolyl cis-trans isomerase G (Ppig) (Mus musculus (Mouse)).